The chain runs to 377 residues: Glutamate 5-kinase (377 aa).

K18 lines the ATP pocket. 3 residues coordinate substrate: S59, D146, and N158. ATP is bound by residues 178–179 and 222–228; these read SD and TGGMATK. In terms of domain architecture, PUA spans 286-363; that stretch reads QGWVTVDAGA…DAIEAELGFT (78 aa).

Belongs to the glutamate 5-kinase family.

The protein resides in the cytoplasm. It catalyses the reaction L-glutamate + ATP = L-glutamyl 5-phosphate + ADP. It functions in the pathway amino-acid biosynthesis; L-proline biosynthesis; L-glutamate 5-semialdehyde from L-glutamate: step 1/2. In terms of biological role, catalyzes the transfer of a phosphate group to glutamate to form L-glutamate 5-phosphate. The protein is Glutamate 5-kinase of Caulobacter vibrioides (strain ATCC 19089 / CIP 103742 / CB 15) (Caulobacter crescentus).